The sequence spans 181 residues: Adenine phosphoribosyltransferase (181 aa).

This sequence belongs to the purine/pyrimidine phosphoribosyltransferase family. As to quaternary structure, homodimer.

It is found in the cytoplasm. It catalyses the reaction AMP + diphosphate = 5-phospho-alpha-D-ribose 1-diphosphate + adenine. It participates in purine metabolism; AMP biosynthesis via salvage pathway; AMP from adenine: step 1/1. Its function is as follows. Catalyzes a salvage reaction resulting in the formation of AMP, that is energically less costly than de novo synthesis. The sequence is that of Adenine phosphoribosyltransferase from Rhodopseudomonas palustris (strain BisB5).